The following is a 169-amino-acid chain: Peptide methionine sulfoxide reductase MsrA (169 aa).

C13 is a catalytic residue.

Belongs to the MsrA Met sulfoxide reductase family.

It catalyses the reaction L-methionyl-[protein] + [thioredoxin]-disulfide + H2O = L-methionyl-(S)-S-oxide-[protein] + [thioredoxin]-dithiol. The enzyme catalyses [thioredoxin]-disulfide + L-methionine + H2O = L-methionine (S)-S-oxide + [thioredoxin]-dithiol. Its function is as follows. Has an important function as a repair enzyme for proteins that have been inactivated by oxidation. Catalyzes the reversible oxidation-reduction of methionine sulfoxide in proteins to methionine. The polypeptide is Peptide methionine sulfoxide reductase MsrA (Mycolicibacterium vanbaalenii (strain DSM 7251 / JCM 13017 / BCRC 16820 / KCTC 9966 / NRRL B-24157 / PYR-1) (Mycobacterium vanbaalenii)).